Consider the following 130-residue polypeptide: Cystatin (130 aa).

The signal sequence occupies residues 1–19; it reads MEWKIVVPLLAVAFTVANA. The short motif at 67-71 is the Secondary area of contact element; sequence QVVSG. 2 cysteine pairs are disulfide-bonded: Cys-85–Cys-94 and Cys-108–Cys-128.

The protein belongs to the cystatin family. As to expression, ubiquitous expression including brain, white muscle, heart, gill, kidney, spleen, liver and skin with the highest and lowest level in brain and gill, respectively.

It is found in the secreted. In terms of biological role, cysteine proteinase inhibitor. In Oncorhynchus keta (Chum salmon), this protein is Cystatin.